The primary structure comprises 170 residues: Shikimate kinase (170 aa).

11-16 (LSGKST) lines the ATP pocket. S15 serves as a coordination point for Mg(2+). Residues D33, R57, and G79 each coordinate substrate. ATP is bound at residue R119. R137 lines the substrate pocket.

This sequence belongs to the shikimate kinase family. In terms of assembly, monomer. The cofactor is Mg(2+).

It localises to the cytoplasm. The catalysed reaction is shikimate + ATP = 3-phosphoshikimate + ADP + H(+). It participates in metabolic intermediate biosynthesis; chorismate biosynthesis; chorismate from D-erythrose 4-phosphate and phosphoenolpyruvate: step 5/7. In terms of biological role, catalyzes the specific phosphorylation of the 3-hydroxyl group of shikimic acid using ATP as a cosubstrate. The chain is Shikimate kinase from Clostridium botulinum (strain Okra / Type B1).